Consider the following 441-residue polypeptide: UBX domain-containing protein 6 (441 aa).

A mediates interaction with LMAN1 region spans residues 1-10 (MKKFFQEFKA). Lys2 carries the N-acetylalanine modification. Disordered regions lie at residues 13 to 79 (KFKS…QDTI) and 87 to 106 (LQAE…NVVS). The span at 22 to 36 (KLKESVGEKAHKEKP) shows a compositional bias: basic and acidic residues. Positions 51 to 63 (EAQMAAAAALARL) are VCP/p97-interacting motif (VIM). Over residues 52-61 (AQMAAAAALA) the composition is skewed to low complexity. The residue at position 96 (Ser96) is a Phosphoserine. Residues 175–244 (VDTIAKYLDN…DPEEFYVLSE (70 aa)) enclose the PUB domain. The region spanning 332 to 408 (RKYNYTLLRV…GLVPSALLTF (77 aa)) is the UBX domain.

Interacts with VCP through the PUB domain (via C-terminus) and VIM motif (via N-terminus); the interaction is direct. Forms a ternary complex with CAV1 and VCP. Interacts with SYVN1. Interacts with HERPUD1. Interacts with VCPKMT. May interact with DERL1. Interacts with PLAA, VCP and YOD1; may form a complex involved in macroautophagy. Interacts with LMAN1. In terms of tissue distribution, enhanced expression in testis.

It localises to the cytoplasm. The protein resides in the cytosol. The protein localises to the membrane. Its subcellular location is the nucleus. It is found in the cytoskeleton. It localises to the microtubule organizing center. The protein resides in the centrosome. The protein localises to the early endosome membrane. Its subcellular location is the late endosome membrane. It is found in the lysosome membrane. In terms of biological role, may negatively regulate the ATPase activity of VCP, an ATP-driven segregase that associates with different cofactors to control a wide variety of cellular processes. As a cofactor of VCP, it may play a role in the transport of CAV1 to lysosomes for degradation. It may also play a role in endoplasmic reticulum-associated degradation (ERAD) of misfolded proteins. Together with VCP and other cofactors, it may play a role in macroautophagy, regulating for instance the clearance of damaged lysosomes. The sequence is that of UBX domain-containing protein 6 from Homo sapiens (Human).